Consider the following 123-residue polypeptide: Large ribosomal subunit protein bL12 (123 aa).

It belongs to the bacterial ribosomal protein bL12 family. In terms of assembly, homodimer. Part of the ribosomal stalk of the 50S ribosomal subunit. Forms a multimeric L10(L12)X complex, where L10 forms an elongated spine to which 2 to 4 L12 dimers bind in a sequential fashion. Binds GTP-bound translation factors.

Forms part of the ribosomal stalk which helps the ribosome interact with GTP-bound translation factors. Is thus essential for accurate translation. This chain is Large ribosomal subunit protein bL12, found in Rhodopseudomonas palustris (strain BisA53).